The chain runs to 621 residues: Glutathione-regulated potassium-efflux system protein KefC (621 aa).

12 consecutive transmembrane segments (helical) span residues 4–24 (HTLIQALIYLGAAALIVPVAV), 26–46 (LGLGSVLGYLIAGCIIGPWGF), 54–74 (SILHFAEIGVVLMLFVIGLEL), 90–110 (GALQMIACGALLGGFCILLGM), 114–134 (VAELIGMTLALSSTAIAMQAM), 151–171 (VLLFQDIAAIPLVAMIPLLAV), 178–198 (LGAFALSALKVAGALALVILL), 218–238 (VFSAVALFLVFGFGLLLEEAG), 270–290 (GLLLGLFFIGVGMSVDFGTLV), 294–314 (LRILILLVGFLVIKMGMLWLI), 327–347 (WFAVLLGQGSEFAFVVFGAAQ), and 359–379 (ALTLAVALSMAVTPILLVLLT). Residues 399 to 518 (QPRVIIAGFG…AGVETPERET (120 aa)) form the RCK N-terminal domain. Positions 591–621 (LSLTQRHGWQGTEEGKHTGDPRDEPESKPTV) are disordered. The span at 603–621 (EEGKHTGDPRDEPESKPTV) shows a compositional bias: basic and acidic residues.

This sequence belongs to the monovalent cation:proton antiporter 2 (CPA2) transporter (TC 2.A.37) family. KefC subfamily. Homodimer. Interacts with the regulatory subunit KefF.

It is found in the cell inner membrane. Pore-forming subunit of a potassium efflux system that confers protection against electrophiles. Catalyzes K(+)/H(+) antiport. The polypeptide is Glutathione-regulated potassium-efflux system protein KefC (Enterobacter sp. (strain 638)).